Consider the following 607-residue polypeptide: Guanine nucleotide-binding protein-like 1 (607 aa).

Basic residues predominate over residues 1–14; it reads MPRKKPFSVKQKKK. The disordered stretch occupies residues 1–81; the sequence is MPRKKPFSVK…GPRGYDPNRY (81 aa). Positions 15–26 are enriched in basic and acidic residues; it reads QLQDKRERKRGL. 3 positions are modified to phosphoserine: Ser32, Ser33, and Ser34. Phosphothreonine is present on residues Thr48 and Thr50. Phosphoserine occurs at positions 51 and 68. The region spanning 178–418 is the CP-type G domain; sequence WRQLWRVLEM…LCDCPGLIFP (241 aa). A GTP-binding site is contributed by 225-228; sequence NKVD. Position 324 is a phosphoserine (Ser324). Residues 367–374 and 411–415 each bind GTP; these read GFPNVGKS and DCPGL. The interval 544–607 is disordered; the sequence is GRVGPAGDEE…PYALLGEDEC (64 aa). Over residues 550 to 585 the composition is skewed to acidic residues; it reads GDEEEEEEEELSSSCEEEGEEDRDADEEGEGDEDTP. Ser561, Ser562, and Ser563 each carry phosphoserine.

This sequence belongs to the TRAFAC class YlqF/YawG GTPase family.

Functionally, possible regulatory or functional link with the histocompatibility cluster. The protein is Guanine nucleotide-binding protein-like 1 (Gnl1) of Mus musculus (Mouse).